Consider the following 189-residue polypeptide: uncharacterized protein (189 aa).

A Macro domain is found at 1 to 174 (MKCWTLGDRV…GMEKGVREAL (174 aa)).

This is an uncharacterized protein from Aeropyrum pernix (strain ATCC 700893 / DSM 11879 / JCM 9820 / NBRC 100138 / K1).